A 346-amino-acid chain; its full sequence is MKTGRGVGPTDAAGGPARHLPVMLAEVLAHLAPKDAGTCLDGTFGAGGYTRAILEAANGRVIAIDRDPTAIAGGQALVEETGGRLTLVHERFSHLDQVAQDLGAAPLDGVVLDIGVSSMQLDEADRGFSFRRDGPLDMRMANDGPSAADLVADLDEVELAHVIWTLGEERFSRQIARAIVNARAESPITRTTQLADIVSKVVWAKPGEMHPATRTFQALRIAVNEELQELVGALAAAERVLKPGGRLVVVTFHSLEDRIVKNFLSHRSKAPSASRHMPQAEGPAPSFRLVAKGAVEPGSDEVAGNPRARSAKLRAAERTDAPAHPDGDLAGLLPADLSQRRGRRRS.

Residues Gly47–Tyr49, Asp65, Phe92, Asp113, and Gln120 contribute to the S-adenosyl-L-methionine site. The interval Ala294–Ser346 is disordered. Residues Arg314–Gly327 show a composition bias toward basic and acidic residues. Positions Asp328–Leu337 are enriched in low complexity.

This sequence belongs to the methyltransferase superfamily. RsmH family.

The protein resides in the cytoplasm. It catalyses the reaction cytidine(1402) in 16S rRNA + S-adenosyl-L-methionine = N(4)-methylcytidine(1402) in 16S rRNA + S-adenosyl-L-homocysteine + H(+). Functionally, specifically methylates the N4 position of cytidine in position 1402 (C1402) of 16S rRNA. This chain is Ribosomal RNA small subunit methyltransferase H, found in Azorhizobium caulinodans (strain ATCC 43989 / DSM 5975 / JCM 20966 / LMG 6465 / NBRC 14845 / NCIMB 13405 / ORS 571).